Reading from the N-terminus, the 107-residue chain is Large ribosomal subunit protein uL23 (107 aa).

The protein belongs to the universal ribosomal protein uL23 family. As to quaternary structure, part of the 50S ribosomal subunit. Contacts protein L29, and trigger factor when it is bound to the ribosome.

One of the early assembly proteins it binds 23S rRNA. One of the proteins that surrounds the polypeptide exit tunnel on the outside of the ribosome. Forms the main docking site for trigger factor binding to the ribosome. This is Large ribosomal subunit protein uL23 from Rhodopirellula baltica (strain DSM 10527 / NCIMB 13988 / SH1).